Consider the following 105-residue polypeptide: MKNKIKIRLKSFDHRSLDQATKEIVSAVKRTFANINGPIPLPRKIGRFTVNRSPHVHKKSREQFEIRKHKRLLVIGDPNPAVVDALSKVDLAAGVDVVIELESGE.

It belongs to the universal ribosomal protein uS10 family. Part of the 30S ribosomal subunit.

Functionally, involved in the binding of tRNA to the ribosomes. The chain is Small ribosomal subunit protein uS10 from Rickettsia massiliae (strain Mtu5).